The sequence spans 224 residues: Mannose-specific lectin 3 (224 aa).

Bulb-type lectin domains lie at Asn2–Ala111 and Arg117–Thr222. Cystine bridges form between Cys30-Cys52 and Cys145-Cys170.

As to quaternary structure, heterotetramer of 2 domain 1 and 2 domain 2 chains arranged as a dimer of domain 1/domain 2 heterodimers.

In terms of biological role, mannose-specific lectin. Has weak agglutinating activity towards trypsin-treated erythrocytes from rabbit but not from human. This is Mannose-specific lectin 3 from Crocus vernus (Dutch crocus).